The sequence spans 88 residues: UPF0250 protein bbp_432 (88 aa).

It belongs to the UPF0250 family.

The polypeptide is UPF0250 protein bbp_432 (Buchnera aphidicola subsp. Baizongia pistaciae (strain Bp)).